The chain runs to 340 residues: DNA-directed RNA polymerase subunit alpha (340 aa).

The segment at 1 to 236 (MLSLSKNWNT…EQLQLFISFE (236 aa)) is alpha N-terminal domain (alpha-NTD). The tract at residues 251-340 (FSPYLLKRVD…LSKRYEDSYN (90 aa)) is alpha C-terminal domain (alpha-CTD).

The protein belongs to the RNA polymerase alpha chain family. In terms of assembly, homodimer. The RNAP catalytic core consists of 2 alpha, 1 beta, 1 beta' and 1 omega subunit. When a sigma factor is associated with the core the holoenzyme is formed, which can initiate transcription.

The catalysed reaction is RNA(n) + a ribonucleoside 5'-triphosphate = RNA(n+1) + diphosphate. Functionally, DNA-dependent RNA polymerase catalyzes the transcription of DNA into RNA using the four ribonucleoside triphosphates as substrates. This Rickettsia akari (strain Hartford) protein is DNA-directed RNA polymerase subunit alpha.